The following is a 445-amino-acid chain: MLAYKISPSSISGSVCVPPSKSHTLRAIFLASIAQGTSTIYNALTSPDSEAMIQACEQLGAKIQKKSSFLEITGTPHLSLPPNTIINAGSSGIVFRFFTALAAIFSEKVTITGSSQLQRRPIAPLIHALENFGATFSYEGAPYTLSFTVSGPISSGYTEVSGDDSQYASALAMACSLAEGPFSFTIVNPKERPWFDLTLWWLEQLAMPYSQSGDTYSFLGKSRPRTFSYTVGGDFSSAAFLAAAALLSKSPHPTYLNDLNSNDAQGDKELFYLLQKLGADITFENDSVIVFSSTFSGGNIDMDPFIDALPILAVLCCFATSPSHLYNARGAKDKESDRIIAITEELQKMGACIQPCHNGLLINPSPLYGASMHSHNDHRIAMALSVAAMNASGDSIIHDTECVKKTFPNFIQALNSLHANVQEHHEHISMRAANSRQDLVRQGFC.

The 3-phosphoshikimate site is built by K21, S22, and R26. K21 contributes to the phosphoenolpyruvate binding site. Residues G92 and R120 each coordinate phosphoenolpyruvate. 3-phosphoshikimate contacts are provided by S165, Q166, D307, and K334. Q166 is a phosphoenolpyruvate binding site. D307 (proton acceptor) is an active-site residue. Residues R338, R379, and K405 each coordinate phosphoenolpyruvate.

The protein belongs to the EPSP synthase family. Monomer.

Its subcellular location is the cytoplasm. The enzyme catalyses 3-phosphoshikimate + phosphoenolpyruvate = 5-O-(1-carboxyvinyl)-3-phosphoshikimate + phosphate. It participates in metabolic intermediate biosynthesis; chorismate biosynthesis; chorismate from D-erythrose 4-phosphate and phosphoenolpyruvate: step 6/7. Catalyzes the transfer of the enolpyruvyl moiety of phosphoenolpyruvate (PEP) to the 5-hydroxyl of shikimate-3-phosphate (S3P) to produce enolpyruvyl shikimate-3-phosphate and inorganic phosphate. In Chlamydia felis (strain Fe/C-56) (Chlamydophila felis), this protein is 3-phosphoshikimate 1-carboxyvinyltransferase.